A 287-amino-acid polypeptide reads, in one-letter code: F420-non-reducing hydrogenase vhu subunit G (287 aa).

Belongs to the [NiFe]/[NiFeSe] hydrogenase small subunit family. The F420-non-reducing hydrogenase vhu is composed of four subunits; VhuA, VhuD, VhuG and VhuU.

This chain is F420-non-reducing hydrogenase vhu subunit G (vhuG), found in Methanococcus voltae.